Reading from the N-terminus, the 362-residue chain is Fe-S cluster assembly protein DRE2 (362 aa).

The disordered stretch occupies residues 1–28 (MAPGLDLTPDFHPPTTTTTTTNNAPPQQ). A compositionally biased stretch (low complexity) spans 15–28 (TTTTTTTNNAPPQQ). Residues 24-165 (APPQQRTLLL…KPEYAEEEAV (142 aa)) form an N-terminal SAM-like domain region. Residues 166–254 (PLRFGKKKAA…EETLLTEEDL (89 aa)) form a linker region. Positions 264, 275, 278, and 280 each coordinate [2Fe-2S] cluster. The tract at residues 264-280 (CQPQPGKKRRACKDCTC) is fe-S binding site A. [4Fe-4S] cluster-binding residues include Cys-325, Cys-328, Cys-336, and Cys-339. 2 short sequence motifs (cx2C motif) span residues 325–328 (CGSC) and 336–339 (CSDC). The tract at residues 325–339 (CGSCYLGDAFRCSDC) is fe-S binding site B.

This sequence belongs to the anamorsin family. Monomer. Interacts with TAH18. Interacts with MIA40. It depends on [2Fe-2S] cluster as a cofactor. Requires [4Fe-4S] cluster as cofactor.

The protein localises to the cytoplasm. Its subcellular location is the mitochondrion intermembrane space. In terms of biological role, component of the cytosolic iron-sulfur (Fe-S) protein assembly (CIA) machinery required for the maturation of extramitochondrial Fe-S proteins. Part of an electron transfer chain functioning in an early step of cytosolic Fe-S biogenesis, facilitating the de novo assembly of a [4Fe-4S] cluster on the scaffold complex CFD1-NBP35. Electrons are transferred to DRE2 from NADPH via the FAD- and FMN-containing protein TAH18. TAH18-DRE2 are also required for the assembly of the diferric tyrosyl radical cofactor of ribonucleotide reductase (RNR), probably by providing electrons for reduction during radical cofactor maturation in the catalytic small subunit RNR2. In Chaetomium globosum (strain ATCC 6205 / CBS 148.51 / DSM 1962 / NBRC 6347 / NRRL 1970) (Soil fungus), this protein is Fe-S cluster assembly protein DRE2.